The primary structure comprises 128 residues: Arsenic resistance transcriptional regulator ArsR1 (128 aa).

Positions 11-103 constitute an HTH arsR-type domain; the sequence is MREILTPPIV…AMLKGVVDAN (93 aa). Residues Cys-43 and Cys-45 each contribute to the arsenite site. A DNA-binding region (H-T-H motif) is located at residues 44–67; sequence VCELTHALELSQPKISRHLAQLRE.

Homodimer.

The protein localises to the cytoplasm. Binds arsenite and regulates the expression of arsenic efflux pumps. In vitro, also binds antimony and bismuth, but not arsenate. In Pseudomonas putida (strain ATCC 47054 / DSM 6125 / CFBP 8728 / NCIMB 11950 / KT2440), this protein is Arsenic resistance transcriptional regulator ArsR1.